Consider the following 456-residue polypeptide: Ribosomal RNA small subunit methyltransferase F (456 aa).

S-adenosyl-L-methionine contacts are provided by residues 109–115 (AAAPGGK), Glu133, Arg138, and Asp177. Catalysis depends on Cys230, which acts as the Nucleophile.

The protein belongs to the class I-like SAM-binding methyltransferase superfamily. RsmB/NOP family.

The protein localises to the cytoplasm. The enzyme catalyses cytidine(1400) in 16S rRNA + S-adenosyl-L-methionine = 5-methylcytidine(1400) in 16S rRNA + S-adenosyl-L-homocysteine + H(+). It catalyses the reaction cytidine(1404) in 16S rRNA + S-adenosyl-L-methionine = 5-methylcytidine(1404) in 16S rRNA + S-adenosyl-L-homocysteine + H(+). The catalysed reaction is cytidine(1407) in 16S rRNA + S-adenosyl-L-methionine = 5-methylcytidine(1407) in 16S rRNA + S-adenosyl-L-homocysteine + H(+). Specifically methylates the cytosines at positions 1400 (m5C1400), 1404 (m5C1404) and 1407 (m5C1407) of 16S rRNA. C1400, C1404 and C1407 are methylated in a 30S subunit substrate, but only C1400 and C1404 are methylated when naked 16S rRNA is the substrate. Methylation by RsmF may facilitate growth at temperatures outside the optimal growth temperature. This Thermus thermophilus (strain ATCC 27634 / DSM 579 / HB8) protein is Ribosomal RNA small subunit methyltransferase F.